Here is a 219-residue protein sequence, read N- to C-terminus: Kappa-scoloptoxin(11)-Ss1a (219 aa).

A signal peptide spans 1–16; the sequence is MFYSHLLFFTFTFACS. A propeptide spanning residues 17 to 25 is cleaved from the precursor; the sequence is SSLNRKTKR.

Contains 8 disulfide bonds. Expressed by the venom gland.

It is found in the secreted. Functionally, voltage-gated potassium channel inhibitor. This is Kappa-scoloptoxin(11)-Ss1a from Scolopendra dehaani (Thai centipede).